A 942-amino-acid polypeptide reads, in one-letter code: Lambda-carrageenase (942 aa).

The first 25 residues, 1 to 25 (MKIKILSAMIASSLLIGCVIPTVKA), serve as a signal peptide directing secretion.

Monomer.

The protein localises to the secreted. It catalyses the reaction Endohydrolysis of (1-&gt;4)-beta-linkages in the backbone of lambda-carrageenan, resulting in the tetrasaccharide alpha-D-Galp2,6S2-(1-&gt;3)-beta-D-Galp2S-(1-&gt;4)-alpha-D-Galp2,6S2-(1-&gt;3)-D-Galp2S.. Functionally, hydrolyzes lambda-carrageenan with inversion of anomeric configuration. Does not hydrolyze iota- and kappa-carrageenans, agarose or porphyran. The chain is Lambda-carrageenase from Pseudoalteromonas sp.